We begin with the raw amino-acid sequence, 106 residues long: MQNMEELYELIKQRKATPKKGSYTDYLFTKGLDKILKKVGEESTEVIVAAKNPGDDELTYETADLLYHVLVLLVERGVSFDQIKQELAKREGKMSDYKDRPEIKNL.

Belongs to the PRA-PH family.

It localises to the cytoplasm. The catalysed reaction is 1-(5-phospho-beta-D-ribosyl)-ATP + H2O = 1-(5-phospho-beta-D-ribosyl)-5'-AMP + diphosphate + H(+). The protein operates within amino-acid biosynthesis; L-histidine biosynthesis; L-histidine from 5-phospho-alpha-D-ribose 1-diphosphate: step 2/9. The sequence is that of Phosphoribosyl-ATP pyrophosphatase from Lactiplantibacillus plantarum (strain ATCC BAA-793 / NCIMB 8826 / WCFS1) (Lactobacillus plantarum).